Here is a 327-residue protein sequence, read N- to C-terminus: Aldo-keto reductase family 1 member A1 (327 aa).

Residues 13 to 22, Thr-23, Trp-24, and Asp-47 contribute to the NADP(+) site; that span reads GQKIPLIGLG. Tyr-52 (proton donor) is an active-site residue. NADP(+) is bound by residues Ser-164, Asn-165, Ser-213, Leu-215, Ser-217, Lys-265, Ser-266, Val-267, Thr-268, Arg-271, Gln-274, and Asn-275.

This sequence belongs to the aldo/keto reductase family.

The protein resides in the cytoplasm. It localises to the cytosol. It is found in the apical cell membrane. It catalyses the reaction a primary alcohol + NADP(+) = an aldehyde + NADPH + H(+). The catalysed reaction is S-nitroso-CoA + NADPH + H(+) = sulfinamide-CoA + NADP(+). The enzyme catalyses S-nitrosoglutathione + NADPH + H(+) = S-(hydroxysulfenamide)glutathione + NADP(+). Its function is as follows. Catalyzes the NADPH-dependent reduction of a wide variety of carbonyl-containing compounds to their corresponding alcohols. Displays enzymatic activity towards endogenous metabolites such as aromatic and aliphatic aldehydes, ketones, monosaccharides and bile acids. Acts as an aldehyde-detoxification enzyme. Also acts as an inhibitor of protein S-nitrosylation by mediating degradation of S-nitroso-coenzyme A (S-nitroso-CoA), a cofactor required to S-nitrosylate proteins. Also acts as a S-nitroso-glutathione reductase by catalyzing the NADPH-dependent reduction of S-nitrosoglutathione. Displays no reductase activity towards retinoids. The polypeptide is Aldo-keto reductase family 1 member A1 (akr1a1) (Xenopus tropicalis (Western clawed frog)).